The sequence spans 554 residues: Chaperonin GroEL (554 aa).

Residues 29 to 32 (TLGP), K50, 86 to 90 (DGTTT), G414, and D495 contribute to the ATP site.

Belongs to the chaperonin (HSP60) family. In terms of assembly, forms a cylinder of 14 subunits composed of two heptameric rings stacked back-to-back. Interacts with the co-chaperonin GroES.

The protein localises to the cytoplasm. The catalysed reaction is ATP + H2O + a folded polypeptide = ADP + phosphate + an unfolded polypeptide.. Functionally, together with its co-chaperonin GroES, plays an essential role in assisting protein folding. The GroEL-GroES system forms a nano-cage that allows encapsulation of the non-native substrate proteins and provides a physical environment optimized to promote and accelerate protein folding. The chain is Chaperonin GroEL from Pelagibacter ubique (strain HTCC1062).